The chain runs to 146 residues: Large ribosomal subunit protein uL15 (146 aa).

Over residues 1–13 (MKLNELKPNEGSR) the composition is skewed to basic and acidic residues. The interval 1 to 54 (MKLNELKPNEGSRRNRKRVGRGTSSGYGKTAGRGQKGQLARTGGKTRLGFEGGQ) is disordered. Residues 23 to 35 (TSSGYGKTAGRGQ) are compositionally biased toward gly residues.

Belongs to the universal ribosomal protein uL15 family. In terms of assembly, part of the 50S ribosomal subunit.

Functionally, binds to the 23S rRNA. The sequence is that of Large ribosomal subunit protein uL15 from Lactobacillus johnsonii (strain CNCM I-12250 / La1 / NCC 533).